The primary structure comprises 306 residues: NAD kinase 1 (306 aa).

The Proton acceptor role is filled by Asp-67. Residues 67-68 (DG), 149-150 (NE), Asp-181, and 192-197 (TGYTVS) each bind NAD(+).

The protein belongs to the NAD kinase family. It depends on a divalent metal cation as a cofactor.

The protein localises to the cytoplasm. It carries out the reaction NAD(+) + ATP = ADP + NADP(+) + H(+). Its function is as follows. Involved in the regulation of the intracellular balance of NAD and NADP, and is a key enzyme in the biosynthesis of NADP. Catalyzes specifically the phosphorylation on 2'-hydroxyl of the adenosine moiety of NAD to yield NADP. The polypeptide is NAD kinase 1 (Trichormus variabilis (strain ATCC 29413 / PCC 7937) (Anabaena variabilis)).